We begin with the raw amino-acid sequence, 337 residues long: Anthranilate phosphoribosyltransferase (337 aa).

5-phospho-alpha-D-ribose 1-diphosphate-binding positions include glycine 80, 83–84, threonine 88, 90–93, 108–116, and serine 120; these read GD, NIST, and KHGNRAVSS. Glycine 80 provides a ligand contact to anthranilate. Serine 92 provides a ligand contact to Mg(2+). Residue asparagine 111 participates in anthranilate binding. Residue arginine 166 participates in anthranilate binding. Mg(2+) contacts are provided by aspartate 224 and glutamate 225.

The protein belongs to the anthranilate phosphoribosyltransferase family. In terms of assembly, homodimer. Mg(2+) serves as cofactor.

It carries out the reaction N-(5-phospho-beta-D-ribosyl)anthranilate + diphosphate = 5-phospho-alpha-D-ribose 1-diphosphate + anthranilate. The protein operates within amino-acid biosynthesis; L-tryptophan biosynthesis; L-tryptophan from chorismate: step 2/5. Functionally, catalyzes the transfer of the phosphoribosyl group of 5-phosphorylribose-1-pyrophosphate (PRPP) to anthranilate to yield N-(5'-phosphoribosyl)-anthranilate (PRA). This chain is Anthranilate phosphoribosyltransferase, found in Anaeromyxobacter sp. (strain Fw109-5).